A 187-amino-acid chain; its full sequence is Ribosome-recycling factor (187 aa).

Belongs to the RRF family.

The protein resides in the cytoplasm. In terms of biological role, responsible for the release of ribosomes from messenger RNA at the termination of protein biosynthesis. May increase the efficiency of translation by recycling ribosomes from one round of translation to another. This chain is Ribosome-recycling factor, found in Bradyrhizobium sp. (strain ORS 278).